The following is a 185-amino-acid chain: Ribosome-recycling factor (185 aa).

Belongs to the RRF family.

It localises to the cytoplasm. Its function is as follows. Responsible for the release of ribosomes from messenger RNA at the termination of protein biosynthesis. May increase the efficiency of translation by recycling ribosomes from one round of translation to another. The polypeptide is Ribosome-recycling factor (Oceanobacillus iheyensis (strain DSM 14371 / CIP 107618 / JCM 11309 / KCTC 3954 / HTE831)).